The primary structure comprises 196 residues: Large ribosomal subunit protein eL15 (196 aa).

The tract at residues 153–196 (DPSSRGRATRGKTSAGRKGRGMATRGKGTEKTRPSIRAYKSRGK) is disordered. A compositionally biased stretch (basic residues) spans 159–172 (RATRGKTSAGRKGR).

It belongs to the eukaryotic ribosomal protein eL15 family.

This chain is Large ribosomal subunit protein eL15, found in Methanosarcina acetivorans (strain ATCC 35395 / DSM 2834 / JCM 12185 / C2A).